Here is a 207-residue protein sequence, read N- to C-terminus: High frequency lysogenization protein HflD homolog (207 aa).

This sequence belongs to the HflD family.

It is found in the cytoplasm. Its subcellular location is the cell inner membrane. The sequence is that of High frequency lysogenization protein HflD homolog from Pseudomonas fluorescens (strain ATCC BAA-477 / NRRL B-23932 / Pf-5).